Here is a 1997-residue protein sequence, read N- to C-terminus: Receptor-type tyrosine-protein phosphatase beta (1997 aa).

The first 22 residues, 1-22, serve as a signal peptide directing secretion; that stretch reads MLSHGAGLALWITLSLLQTGLA. 17 consecutive Fibronectin type-III domains span residues 23–111, 112–207, 203–288, 291–378, 379–471, 467–552, 556–641, 642–729, 730–829, 819–906, 909–1001, 995–1083, 1087–1175, 1173–1260, 1260–1356, 1357–1448, and 1458–1554; these read EPER…TDPL, PPAR…SPVK, PSPV…VRTA, EVSN…TFPD, KVAN…LAVL, PLAV…KGRT, QVTD…EGRT, VPSS…QERT, VPDK…TLRN, PEPV…GFTV, AVKN…VQGV, PASV…EGRT, AVTD…VPAS, PASV…SRTA, APSP…TKPD, KIQN…IDRP, and NEKD…EMES. Over 23–1621 the chain is Extracellular; it reads EPERCNFTLA…ESEPLFGAIE (1599 aa). 16 N-linked (GlcNAc...) asparagine glycosylation sites follow: N28, N53, N75, N172, N198, N267, N321, N414, N421, N479, N544, N574, N598, N652, N721, and N829. N-linked (GlcNAc...) asparagine glycans are attached at residues N1040, N1096, N1163, N1185, N1212, N1274, N1367, N1470, N1474, and N1518. The chain crosses the membrane as a helical span at residues 1622–1642; sequence GVSAGLFLIGMLVAVVALLIC. Residues 1643–1997 are Cytoplasmic-facing; sequence RQKVSHGRER…YHRDPVYSRH (355 aa). The Tyrosine-protein phosphatase domain occupies 1703–1963; it reads LSKEYEELKD…VYLHQCVRDV (261 aa). Substrate is bound by residues D1870, 1904 to 1910, and Q1948; that span reads CSAGVGR. C1904 (phosphocysteine intermediate) is an active-site residue. The residue at position 1981 (Y1981) is a Phosphotyrosine.

Belongs to the protein-tyrosine phosphatase family. Receptor class 3 subfamily. In terms of assembly, monomer. Interacts with TEK. Interacts via fibronectin type-III 17 domain with CDH5. Detected in a complex with CNTN1 and NRCAM. Interacts (phosphorylated form) with FYN and GRB2. Interacts with IGFBP2.

It localises to the membrane. It carries out the reaction O-phospho-L-tyrosyl-[protein] + H2O = L-tyrosyl-[protein] + phosphate. Its function is as follows. Plays an important role in blood vessel remodeling and angiogenesis. Not necessary for the initial formation of blood vessels, but is essential for their maintenance and remodeling. Can induce dephosphorylation of TEK/TIE2, CDH5/VE-cadherin and KDR/VEGFR-2. Regulates angiopoietin-TIE2 signaling in endothelial cells. Acts as a negative regulator of TIE2, and controls TIE2 driven endothelial cell proliferation, which in turn affects blood vessel remodeling during embryonic development and determines blood vessel size during perinatal growth. Essential for the maintenance of endothelial cell contact integrity and for the adhesive function of VE-cadherin in endothelial cells and this requires the presence of plakoglobin. This is Receptor-type tyrosine-protein phosphatase beta (PTPRB) from Homo sapiens (Human).